The chain runs to 156 residues: Small ribosomal subunit protein uS7 (156 aa).

This sequence belongs to the universal ribosomal protein uS7 family. In terms of assembly, part of the 30S ribosomal subunit. Contacts proteins S9 and S11.

Its function is as follows. One of the primary rRNA binding proteins, it binds directly to 16S rRNA where it nucleates assembly of the head domain of the 30S subunit. Is located at the subunit interface close to the decoding center, probably blocks exit of the E-site tRNA. The protein is Small ribosomal subunit protein uS7 of Mycobacterium leprae (strain Br4923).